Consider the following 1128-residue polypeptide: Apoptosis-stimulating of p53 protein 2 (1128 aa).

2 disordered regions span residues 86 to 106 and 322 to 341; these read PGRD…RNGV and KENL…ASAP. The segment covering 322–339 has biased composition (polar residues); that stretch reads KENLPVSSDGNLPQQAAS. The interaction with APPBP1 stretch occupies residues 332–348; it reads NLPQQAASAPSRVAAVG. Ser480 carries the post-translational modification Phosphoserine. 2 disordered regions span residues 494-598 and 655-706; these read NVAK…LPPF and NQQQ…LPFL. The segment covering 528–537 has biased composition (polar residues); sequence GSSQQLSTVV. Phosphoserine is present on residues Ser556, Ser569, Ser572, and Ser576. Over residues 558 to 575 the composition is skewed to polar residues; the sequence is SIPSVGQDQTLSPGSKQE. A compositionally biased stretch (polar residues) spans 655-670; the sequence is NQQQHPENIYSNSQGK. Ser698, Ser714, and Ser737 each carry phosphoserine. Disordered regions lie at residues 724–748 and 802–909; these read KLSN…NGPN and SLVP…TNLR. Positions 840–849 are enriched in low complexity; sequence NSPNLQNNPE. The SH3-binding signature appears at 866-875; it reads YPPYPPPPYP. Pro residues predominate over residues 867–876; it reads PPYPPPPYPS. Positions 876 to 1128 are mediates interaction with APC2; it reads SGEPEGPGED…RIKPRQRSLA (253 aa). ANK repeat units lie at residues 926 to 957, 958 to 990, 991 to 1024, and 1025 to 1067; these read PLAL…LPND, EGIT…AADS, DGWT…MTYS, and DMQT…ALWD. Residues 1057–1119 form the SH3 domain; the sequence is MNKGVIYALW…PRNLLGLYPR (63 aa).

It belongs to the ASPP family. In terms of assembly, interacts with P53/TP53; the interaction promotes pro-apoptotic activity. Interacts with BCL2. Interacts with protein phosphatase 1. Interacts with RELA NF-kappa-B subunit. This interaction probably prevents the activation of apoptosis, possibly by preventing its interaction with TP53. Interacts with APC2 and NAE1. Interacts with DDX42 (via the C-terminus); the interaction is not inhibited by TP53BP2 ubiquitination and is independent of p53/TP53. Widely expressed. Expressed in spleen, thymus, prostate, testis, ovary, small intestine, colon and peripheral blood leukocyte. Reduced expression in breast carcinomas expressing a wild-type TP53 protein. Overexpressed in lung cancer cell lines.

Its subcellular location is the cytoplasm. The protein localises to the perinuclear region. It localises to the nucleus. Functionally, regulator that plays a central role in regulation of apoptosis and cell growth via its interactions with proteins such as TP53. Regulates TP53 by enhancing the DNA binding and transactivation function of TP53 on the promoters of proapoptotic genes in vivo. Inhibits the ability of NAE1 to conjugate NEDD8 to CUL1, and thereby decreases NAE1 ability to induce apoptosis. Impedes cell cycle progression at G2/M. Its apoptosis-stimulating activity is inhibited by its interaction with DDX42. The sequence is that of Apoptosis-stimulating of p53 protein 2 (TP53BP2) from Homo sapiens (Human).